A 170-amino-acid polypeptide reads, in one-letter code: MAIKNLQNNNDLSELLVSVRRVTTVTKGGRRFSFSILVVVGDEKGRVGCGIGKHAEVAEARVKAVNAAKKSMIRVYLREGRTLHHDIKAKFCSGEIVLRTARAGTGIIAGGAIRSVFEVLGIKDVVAKSTRSNNPHNVICAVFKAFDSMLSPRQVASKRGKKISEIVGNR.

The S5 DRBM domain maps to 12–75 (LSELLVSVRR…NAAKKSMIRV (64 aa)).

This sequence belongs to the universal ribosomal protein uS5 family. Part of the 30S ribosomal subunit. Contacts proteins S4 and S8.

With S4 and S12 plays an important role in translational accuracy. Its function is as follows. Located at the back of the 30S subunit body where it stabilizes the conformation of the head with respect to the body. The chain is Small ribosomal subunit protein uS5 from Wolbachia pipientis wMel.